The following is a 417-amino-acid chain: Lipoyl synthase, mitochondrial (417 aa).

A mitochondrion-targeting transit peptide spans 1–30 (MATSIPRSRCFLTSSTLKVVPRSRTPLRSF). The tract at residues 23-62 (SRTPLRSFATTSDTPQTSVPEAPGKRSRPPTSFSDTLNAG) is disordered. 2 stretches are compositionally biased toward polar residues: residues 30–41 (FATTSDTPQTSV) and 51–61 (PPTSFSDTLNA). [4Fe-4S] cluster contacts are provided by C132, C137, C143, C163, C167, C170, and S378. One can recognise a Radical SAM core domain in the interval 146-367 (GSSKSAATAT…RQRALDMGFL (222 aa)).

This sequence belongs to the radical SAM superfamily. Lipoyl synthase family. [4Fe-4S] cluster serves as cofactor.

Its subcellular location is the mitochondrion. It catalyses the reaction [[Fe-S] cluster scaffold protein carrying a second [4Fe-4S](2+) cluster] + N(6)-octanoyl-L-lysyl-[protein] + 2 oxidized [2Fe-2S]-[ferredoxin] + 2 S-adenosyl-L-methionine + 4 H(+) = [[Fe-S] cluster scaffold protein] + N(6)-[(R)-dihydrolipoyl]-L-lysyl-[protein] + 4 Fe(3+) + 2 hydrogen sulfide + 2 5'-deoxyadenosine + 2 L-methionine + 2 reduced [2Fe-2S]-[ferredoxin]. It functions in the pathway protein modification; protein lipoylation via endogenous pathway; protein N(6)-(lipoyl)lysine from octanoyl-[acyl-carrier-protein]: step 2/2. In terms of biological role, catalyzes the radical-mediated insertion of two sulfur atoms into the C-6 and C-8 positions of the octanoyl moiety bound to the lipoyl domains of lipoate-dependent enzymes, thereby converting the octanoylated domains into lipoylated derivatives. The chain is Lipoyl synthase, mitochondrial from Pyrenophora tritici-repentis (strain Pt-1C-BFP) (Wheat tan spot fungus).